Consider the following 154-residue polypeptide: Myoglobin (154 aa).

Positions 2 to 148 (GLSDQEWQQV…FRNDMASKYK (147 aa)) constitute a Globin domain. Nitrite is bound at residue His-65. His-65 lines the O2 pocket. Heme b is bound at residue His-94.

Belongs to the globin family. In terms of assembly, monomeric.

Its subcellular location is the cytoplasm. The protein resides in the sarcoplasm. It catalyses the reaction Fe(III)-heme b-[protein] + nitric oxide + H2O = Fe(II)-heme b-[protein] + nitrite + 2 H(+). The catalysed reaction is H2O2 + AH2 = A + 2 H2O. Monomeric heme protein which primary function is to store oxygen and facilitate its diffusion within muscle tissues. Reversibly binds oxygen through a pentacoordinated heme iron and enables its timely and efficient release as needed during periods of heightened demand. Depending on the oxidative conditions of tissues and cells, and in addition to its ability to bind oxygen, it also has a nitrite reductase activity whereby it regulates the production of bioactive nitric oxide. Under stress conditions, like hypoxia and anoxia, it also protects cells against reactive oxygen species thanks to its pseudoperoxidase activity. This is Myoglobin (MB) from Gallus gallus (Chicken).